Here is a 208-residue protein sequence, read N- to C-terminus: N-(5'-phosphoribosyl)anthranilate isomerase (208 aa).

It belongs to the TrpF family.

It catalyses the reaction N-(5-phospho-beta-D-ribosyl)anthranilate = 1-(2-carboxyphenylamino)-1-deoxy-D-ribulose 5-phosphate. Its pathway is amino-acid biosynthesis; L-tryptophan biosynthesis; L-tryptophan from chorismate: step 3/5. The protein is N-(5'-phosphoribosyl)anthranilate isomerase of Methanococcus maripaludis (strain C7 / ATCC BAA-1331).